We begin with the raw amino-acid sequence, 117 residues long: Non-specific lipid-transfer protein (117 aa).

The first 26 residues, 1–26 (MASSAFVKFTCALVMCMMVAAPLAEA), serve as a signal peptide directing secretion. Disulfide bonds link Cys-29-Cys-76, Cys-39-Cys-53, Cys-54-Cys-99, and Cys-74-Cys-113.

Belongs to the plant LTP family.

Plant non-specific lipid-transfer proteins transfer phospholipids as well as galactolipids across membranes. May play a role in wax or cutin deposition in the cell walls of expanding epidermal cells and certain secretory tissues. Also has fungicide activity. The chain is Non-specific lipid-transfer protein (IWF1') from Beta vulgaris (Sugar beet).